Reading from the N-terminus, the 250-residue chain is Serine/arginine-rich splicing factor RS31A (250 aa).

2 RRM domains span residues 2–74 (RHVY…WAKD) and 95–166 (KTLF…YALR). The disordered stretch occupies residues 170–250 (EREDRYAGSR…SRSPIQRARG (81 aa)). Residues 177–191 (GSRRRRSPSPVYRRR) show a composition bias toward basic residues. Phosphoserine occurs at positions 183, 185, 201, 218, and 243. Positions 192–230 (PSPDYTRRRSPEYDRYKGPAPYERRKSPDYGRRSSDYGR) are enriched in basic and acidic residues.

The protein belongs to the splicing factor SR family. RS subfamily. As to quaternary structure, component of the spliceosome. Interacts with MOS14.

It localises to the nucleus speckle. The protein resides in the nucleus. The protein localises to the nucleoplasm. Functionally, probably involved in intron recognition and spliceosome assembly. The chain is Serine/arginine-rich splicing factor RS31A (RS31A) from Arabidopsis thaliana (Mouse-ear cress).